The primary structure comprises 87 residues: Acetolactate synthase isozyme 2 small subunit (87 aa).

An ACT domain is found at 5-78; sequence QVNVSARFNP…DVAHVAICQS (74 aa).

As to quaternary structure, tetramer of two large and two small chains. Requires Mg(2+) as cofactor. Thiamine diphosphate is required as a cofactor.

It carries out the reaction 2 pyruvate + H(+) = (2S)-2-acetolactate + CO2. The protein operates within amino-acid biosynthesis; L-isoleucine biosynthesis; L-isoleucine from 2-oxobutanoate: step 1/4. It functions in the pathway amino-acid biosynthesis; L-valine biosynthesis; L-valine from pyruvate: step 1/4. This is Acetolactate synthase isozyme 2 small subunit (ilvM) from Escherichia coli O6:H1 (strain CFT073 / ATCC 700928 / UPEC).